The sequence spans 459 residues: Cysteine--tRNA ligase (459 aa).

Cysteine 28 contributes to the Zn(2+) binding site. A 'HIGH' region motif is present at residues 30-40 (ITIYDLCHIGH). Cysteine 209, histidine 234, and glutamate 238 together coordinate Zn(2+). Residues 266 to 270 (KMSKS) carry the 'KMSKS' region motif. Lysine 269 lines the ATP pocket.

It belongs to the class-I aminoacyl-tRNA synthetase family. In terms of assembly, monomer. The cofactor is Zn(2+).

Its subcellular location is the cytoplasm. It carries out the reaction tRNA(Cys) + L-cysteine + ATP = L-cysteinyl-tRNA(Cys) + AMP + diphosphate. The chain is Cysteine--tRNA ligase from Shewanella sediminis (strain HAW-EB3).